Consider the following 238-residue polypeptide: 5'-deoxynucleotidase YBR242W (238 aa).

One can recognise an HD domain in the interval I77–L183. H80, H108, D109, E112, D117, I118, and D178 together coordinate a divalent metal cation.

The protein belongs to the HDDC2 family. In terms of assembly, homodimer. The cofactor is Mn(2+). It depends on Co(2+) as a cofactor. Mg(2+) is required as a cofactor.

It carries out the reaction a 2'-deoxyribonucleoside 5'-phosphate + H2O = a 2'-deoxyribonucleoside + phosphate. Functionally, catalyzes the dephosphorylation of the nucleoside 5'-monophosphates deoxyadenosine monophosphate (dAMP), deoxycytidine monophosphate (dCMP), deoxyguanosine monophosphate (dGMP) and deoxythymidine monophosphate (dTMP). This chain is 5'-deoxynucleotidase YBR242W, found in Saccharomyces cerevisiae (strain ATCC 204508 / S288c) (Baker's yeast).